The following is a 598-amino-acid chain: Serine hydroxymethyltransferase 7 (598 aa).

The tract at residues 57-85 is disordered; that stretch reads QLLEQKAEKTTTVDEPKKDGGGGGDQKED. The segment covering 61–85 has biased composition (basic and acidic residues); that stretch reads QKAEKTTTVDEPKKDGGGGGDQKED. Lys-370 is modified (N6-(pyridoxal phosphate)lysine).

This sequence belongs to the SHMT family. In terms of assembly, homotetramer. The cofactor is pyridoxal 5'-phosphate.

The protein resides in the cytoplasm. The catalysed reaction is (6R)-5,10-methylene-5,6,7,8-tetrahydrofolate + glycine + H2O = (6S)-5,6,7,8-tetrahydrofolate + L-serine. It functions in the pathway one-carbon metabolism; tetrahydrofolate interconversion. Its function is as follows. Catalyzes the interconversion of serine and glycine. In Arabidopsis thaliana (Mouse-ear cress), this protein is Serine hydroxymethyltransferase 7 (SHM7).